Consider the following 154-residue polypeptide: 3-hydroxyacyl-[acyl-carrier-protein] dehydratase FabZ (154 aa).

His-54 is a catalytic residue.

Belongs to the thioester dehydratase family. FabZ subfamily.

It localises to the cytoplasm. The catalysed reaction is a (3R)-hydroxyacyl-[ACP] = a (2E)-enoyl-[ACP] + H2O. In terms of biological role, involved in unsaturated fatty acids biosynthesis. Catalyzes the dehydration of short chain beta-hydroxyacyl-ACPs and long chain saturated and unsaturated beta-hydroxyacyl-ACPs. In Shewanella sp. (strain MR-4), this protein is 3-hydroxyacyl-[acyl-carrier-protein] dehydratase FabZ.